Here is a 269-residue protein sequence, read N- to C-terminus: Thymidylate synthase (269 aa).

Arg26 contacts dUMP. His56 contacts (6R)-5,10-methylene-5,6,7,8-tetrahydrofolate. A dUMP-binding site is contributed by 131–132 (RR). Catalysis depends on Cys151, which acts as the Nucleophile. DUMP is bound by residues 171-174 (RSAD), Asn182, and 212-214 (HIY). Asp174 is a (6R)-5,10-methylene-5,6,7,8-tetrahydrofolate binding site. Ala268 is a (6R)-5,10-methylene-5,6,7,8-tetrahydrofolate binding site.

It belongs to the thymidylate synthase family. Bacterial-type ThyA subfamily. In terms of assembly, homodimer.

The protein resides in the cytoplasm. The catalysed reaction is dUMP + (6R)-5,10-methylene-5,6,7,8-tetrahydrofolate = 7,8-dihydrofolate + dTMP. Its pathway is pyrimidine metabolism; dTTP biosynthesis. In terms of biological role, catalyzes the reductive methylation of 2'-deoxyuridine-5'-monophosphate (dUMP) to 2'-deoxythymidine-5'-monophosphate (dTMP) while utilizing 5,10-methylenetetrahydrofolate (mTHF) as the methyl donor and reductant in the reaction, yielding dihydrofolate (DHF) as a by-product. This enzymatic reaction provides an intracellular de novo source of dTMP, an essential precursor for DNA biosynthesis. The polypeptide is Thymidylate synthase (Leifsonia xyli subsp. xyli (strain CTCB07)).